A 377-amino-acid polypeptide reads, in one-letter code: Nitric oxide reductase FlRd-NAD(+) reductase (377 aa).

The protein belongs to the FAD-dependent oxidoreductase family. The cofactor is FAD.

The protein resides in the cytoplasm. The catalysed reaction is 2 reduced [nitric oxide reductase rubredoxin domain] + NAD(+) + H(+) = 2 oxidized [nitric oxide reductase rubredoxin domain] + NADH. Its pathway is nitrogen metabolism; nitric oxide reduction. Functionally, one of at least two accessory proteins for anaerobic nitric oxide (NO) reductase. Reduces the rubredoxin moiety of NO reductase. The polypeptide is Nitric oxide reductase FlRd-NAD(+) reductase (Salmonella typhi).